A 255-amino-acid polypeptide reads, in one-letter code: Imidazole glycerol phosphate synthase subunit HisF (255 aa).

Catalysis depends on residues Asp-12 and Asp-131.

It belongs to the HisA/HisF family. Heterodimer of HisH and HisF.

Its subcellular location is the cytoplasm. The catalysed reaction is 5-[(5-phospho-1-deoxy-D-ribulos-1-ylimino)methylamino]-1-(5-phospho-beta-D-ribosyl)imidazole-4-carboxamide + L-glutamine = D-erythro-1-(imidazol-4-yl)glycerol 3-phosphate + 5-amino-1-(5-phospho-beta-D-ribosyl)imidazole-4-carboxamide + L-glutamate + H(+). It functions in the pathway amino-acid biosynthesis; L-histidine biosynthesis; L-histidine from 5-phospho-alpha-D-ribose 1-diphosphate: step 5/9. Its function is as follows. IGPS catalyzes the conversion of PRFAR and glutamine to IGP, AICAR and glutamate. The HisF subunit catalyzes the cyclization activity that produces IGP and AICAR from PRFAR using the ammonia provided by the HisH subunit. The sequence is that of Imidazole glycerol phosphate synthase subunit HisF from Neisseria meningitidis serogroup C (strain 053442).